Reading from the N-terminus, the 707-residue chain is Keratin, type II cytoskeletal 2 epidermal (707 aa).

Residues 1 to 20 (MSCQISCRSRRGGGGGGGGG) form a disordered region. Residues 1–198 (MSCQISCRSR…DPEIQNVKSQ (198 aa)) form a head region. Position 22 is an asymmetric dimethylarginine (Arg-22). A phosphoserine mark is found at Ser-25 and Ser-28. Low complexity predominate over residues 29-38 (AVVSGGSRRS). Residues 29–59 (AVVSGGSRRSNTSFSCISRHGGGRGGSGGGG) are disordered. Arg-52 bears the Omega-N-methylarginine mark. Phosphoserine is present on Ser-64. A coil 1A region spans residues 199 to 234 (EREQIKTLNNKFASFIDKVRFLEQQNQVLRTKWELL). One can recognise an IF rod domain in the interval 199–512 (EREQIKTLNN…KLLEGEECRM (314 aa)). The tract at residues 235–253 (QQLDVGSRTTNLDPIFQAY) is linker 1. Positions 254–345 (IGMLKKQVDR…TLYDAELSQL (92 aa)) are coil 1B. A linker 12 region spans residues 346–369 (QQDVTDTNVILSMDNNRNLDLDSI). Residues 370–508 (IAEVQNQYEM…ATYRKLLEGE (139 aa)) are coil 2. Residues 509 to 707 (ECRMSGDFSD…CGSGVTFSFR (199 aa)) form a tail region. The segment at 531-707 (SSVASKTGFG…CGSGVTFSFR (177 aa)) is disordered. Residues 539–700 (FGSGGQSSGG…GSGSGEGCGS (162 aa)) are compositionally biased toward gly residues. 4 positions are modified to omega-N-methylarginine: Arg-555, Arg-593, Arg-607, and Arg-675.

The protein belongs to the intermediate filament family. In terms of assembly, heterotetramer of two type I and two type II keratins. Associates with KRT10. Expressed predominantly in the suprabasal layers of the plantar epidermis outside of the footpads (at protein level). Expressed in the suprabasal layers of the interfollicular epidermis of the ear, in the interscale regions distant from the hair follicles in the tail, and in the soles of the footpads (at protein level). Expressed mainly in the middle spinous and granular cells of the epidermis of adult tail, nipple and footsole skin. Also found in ear.

The protein localises to the cytoplasm. Functionally, probably contributes to terminal cornification. Associated with keratinocyte activation, proliferation and keratinization. Required for maintenance of corneocytes and keratin filaments in suprabasal keratinocytes in the epidermis of the ear, potentially via moderation of expression and localization of keratins and their partner proteins. Plays a role in the establishment of the epidermal barrier on plantar skin. The sequence is that of Keratin, type II cytoskeletal 2 epidermal from Mus musculus (Mouse).